The following is a 710-amino-acid chain: MANEEDDPVIQEIDVYLAKSLAEKLYLFQYPVRPASMTYDDIPHLSAKIKPKQQKVELEMAIDTLNPNYCRSKGEQIALNVDGACADETSTYSSKLMDKQTFCSSQTTSNTARYAAALYRQGELHLTPLHGILQLRPSFSYLDKADAKHREREAANEAGDSSQDEAEEDVKQITVRFSRPESEQARQRRVQSYEFLQKKHAEEPWVHLHYYGMRDSRSEHERQYLLCQGSSGVENTELVKSPSEYLMMLMPPSPEEEKDKPVAPSNVLSMAQLRTLPLADQIKVLMKNVKVMPFANLMSLLGPSVDSVAVLRGIQKVAMLVQGNWVVKSDILYPKDSSSPHSGMPAEVLCRGRDFVMWKFTQSRWVVRKEVAAVTKLCAEDVKDFLEHMAVVRINKGWEFLLPYDLEFIKKHPDVVQRQHMLWSGIQAKLEKVYNLVKETMPKKPDGQSAPVGLVSGEQRVQTAKTKAQQNHAFLERELQRRKEQMRAATVLPSVQIKEEPLSEEEADGAELEAEEEEPMDTAPSTCLSTKLANGLPAGRAVGGDSLNGHPVPGCASNPVACELKAFVEATFQRQFVLTLSELKRLFNLHLAGLPPGHILFSGVSDRMLQDTVLAAGCKQILVPFPPQTAASPDEQKVFALWESGDMSDQHRQVLLEIFSKNYRVRRNLIQSRLTQECGEELSKQEVDKVLKDCCVSCGGMWYLKGTVQS.

Basic and acidic residues predominate over residues 146–155; the sequence is DAKHREREAA. Positions 146–169 are disordered; that stretch reads DAKHREREAANEAGDSSQDEAEED. Phosphoserine is present on residues Ser-161 and Ser-162. Residue Lys-171 forms a Glycyl lysine isopeptide (Lys-Gly) (interchain with G-Cter in SUMO2) linkage. Ser-192 is modified (phosphoserine). Phosphotyrosine is present on Tyr-224. Residue Lys-432 forms a Glycyl lysine isopeptide (Lys-Gly) (interchain with G-Cter in SUMO2) linkage. Lys-498 participates in a covalent cross-link: Glycyl lysine isopeptide (Lys-Gly) (interchain with G-Cter in SUMO1); alternate. Residue Lys-498 forms a Glycyl lysine isopeptide (Lys-Gly) (interchain with G-Cter in SUMO2); alternate linkage. A disordered region spans residues 498–526; it reads KEEPLSEEEADGAELEAEEEEPMDTAPST. The segment covering 502–520 has biased composition (acidic residues); the sequence is LSEEEADGAELEAEEEEPM. Ser-503 carries the phosphoserine modification. The interval 558–710 is required for Pol III complex stability; sequence NPVACELKAF…MWYLKGTVQS (153 aa). Lys-661 participates in a covalent cross-link: Glycyl lysine isopeptide (Lys-Gly) (interchain with G-Cter in SUMO2).

In terms of assembly, component of the RNA polymerase III complex consisting of at least 17 subunits: a ten-subunit horseshoe-shaped catalytic core composed of POLR3A/RPC1, POLR3B/RPC2, POLR1C/RPAC1, POLR1D/RPAC2, POLR3K/RPC10, POLR2E/RPABC1, POLR2F/RPABC2, POLR2H/RPABC3, POLR2K/RPABC4 and POLR2L/RPABC5; the stalk composed of two subunits POLR3H/RPC8 and CRCP/RPC9, forming a structural mobile part that protrudes out of the core and functions primarily in transcription initiation; and additional subunits homologous to general transcription factors of the RNA polymerase II machinery, POLR3D/RPC4-POLR3E/RPC5 heterodimer and POLR3/CRPC3-POLR3F/RPC6-POLR3G/RPC7 heterotrimer.

Its subcellular location is the nucleus. Functionally, DNA-dependent RNA polymerase catalyzes the transcription of DNA into RNA using the four ribonucleoside triphosphates as substrates. Specific peripheric component of RNA polymerase III (Pol III) which synthesizes small non-coding RNAs including 5S rRNA, snRNAs, tRNAs and miRNAs from at least 500 distinct genomic loci. Assembles with POLR3D/RPC4 forming a subcomplex that binds the Pol III core. Enables recruitment of Pol III at transcription initiation site and drives transcription initiation from both type 2 and type 3 DNA promoters. Required for efficient transcription termination and reinitiation. Plays a key role in sensing and limiting infection by intracellular bacteria and DNA viruses. Acts as a nuclear and cytosolic DNA sensor involved in innate immune response. Can sense non-self dsDNA that serves as template for transcription into dsRNA. The non-self RNA polymerase III transcripts, such as Epstein-Barr virus-encoded RNAs (EBERs) induce type I interferon and NF-kappa-B through the RIG-I pathway. The sequence is that of DNA-directed RNA polymerase III subunit RPC5 from Mus musculus (Mouse).